The following is a 157-amino-acid chain: AM-toxin biosynthesis protein 15 (157 aa).

Residues 17 to 43 (RARHWDSKQGSSNSDVASGGSEVAGNS) form a disordered region.

Its pathway is mycotoxin biosynthesis. Its function is as follows. Part of the gene clusters that mediate the biosynthesis of AM-toxins, host-selective toxins (HSTs) causing Alternaria blotch on apple, a worldwide distributed disease. AM-toxins are cyclic depsipeptides containing the 3 residues 2-hydroxy-isovaleric acid (2-HIV), dehydroalanine, L-alanine which are common for all 3 AM-toxins I to III. The fourth precursor is L-alpha-amino-methoxyphenyl-valeric acid (L-Amv) for AM-toxin I, L-alpha-amino-phenyl-valeric acid (L-Apv) for AM-toxin II, and L-alpha-amino-hydroxyphenyl-valeric acid (L-Ahv) for AM-toxin III. AM-toxins have two target sites for affecting susceptible apple cells; they cause invagination of the plasma membrane and electrolyte loss and chloroplast disorganization. The non-ribosomal peptide synthetase AMT1 contains 4 catalytic modules and is responsible for activation of each residue in AM-toxin. The aldo-keto reductase AMT2 catalyzes the conversion of 2-keto-isovaleric acid (2-KIV) to 2-hydroxy-isovaleric acid (2-HIV), one of the precursor residues incorporated by AMT1 during AM-toxin biosynthesis, by reduction of its ketone to an alcohol. The cytochrome P450 monooxygenase AMT3 and the thioesterase AMT4 are also important for AM-toxin production, but their exact function within the AM-toxin biosynthesis are not known yet. Up to 21 proteins (including AMT1 to AMT4) are predicted to be involved in AM-toxin biosynthesis since their expression ishighly up-regulated in AM-toxin-producing cultures. This chain is AM-toxin biosynthesis protein 15, found in Alternaria alternata (Alternaria rot fungus).